The following is a 309-amino-acid chain: NAD kinase (309 aa).

The active-site Proton acceptor is the Asp-89. Residues 89-90 (DG), 163-164 (NE), His-174, Arg-191, Asp-193, and 204-209 (TAYALS) each bind NAD(+).

The protein belongs to the NAD kinase family. Requires a divalent metal cation as cofactor.

Its subcellular location is the cytoplasm. It carries out the reaction NAD(+) + ATP = ADP + NADP(+) + H(+). Functionally, involved in the regulation of the intracellular balance of NAD and NADP, and is a key enzyme in the biosynthesis of NADP. Catalyzes specifically the phosphorylation on 2'-hydroxyl of the adenosine moiety of NAD to yield NADP. This is NAD kinase from Shewanella sp. (strain ANA-3).